A 321-amino-acid chain; its full sequence is ATP-dependent 6-phosphofructokinase (321 aa).

Residue glycine 11 coordinates ATP. 21–25 (RAVVR) is an ADP binding site. ATP contacts are provided by residues 72 to 73 (RC) and 102 to 105 (GDGS). Aspartate 103 provides a ligand contact to Mg(2+). 126-128 (TID) contacts substrate. The active-site Proton acceptor is aspartate 128. Arginine 155 serves as a coordination point for ADP. Substrate contacts are provided by residues arginine 163 and 170-172 (MGR). Residues 186-188 (GAE), arginine 212, and 214-216 (KLH) contribute to the ADP site. Residues glutamate 223, arginine 245, and 251–254 (HIQR) each bind substrate.

The protein belongs to the phosphofructokinase type A (PFKA) family. ATP-dependent PFK group I subfamily. Prokaryotic clade 'B1' sub-subfamily. As to quaternary structure, homotetramer. It depends on Mg(2+) as a cofactor.

Its subcellular location is the cytoplasm. It catalyses the reaction beta-D-fructose 6-phosphate + ATP = beta-D-fructose 1,6-bisphosphate + ADP + H(+). The protein operates within carbohydrate degradation; glycolysis; D-glyceraldehyde 3-phosphate and glycerone phosphate from D-glucose: step 3/4. Allosterically activated by ADP and other diphosphonucleosides, and allosterically inhibited by phosphoenolpyruvate. Catalyzes the phosphorylation of D-fructose 6-phosphate to fructose 1,6-bisphosphate by ATP, the first committing step of glycolysis. This is ATP-dependent 6-phosphofructokinase from Thermoanaerobacter pseudethanolicus (strain ATCC 33223 / 39E) (Clostridium thermohydrosulfuricum).